A 456-amino-acid chain; its full sequence is Probable galactarate/D-glucarate transporter GudP (456 aa).

Helical transmembrane passes span 11 to 31 (YLILLMLFLVTTINYADRATI), 51 to 71 (YIFSAFGWAYVLGQIPGGWLL), 78 to 96 (KVYAGSIFTWSLFTLLQGY), 102 to 119 (ISTAVVLLFLLRFMVGLA), 246 to 266 (IYLGQFCINALTYFFLTWFPV), 280 to 300 (GIIASLPAICGFLGGVLGGVI), 317 to 337 (TPIVCGMVLSMSMIICNYVDA), 341 to 361 (VVCFMALAFFGKAIGALGWAV), 381 to 401 (FGNLSSISTPIIIGYIIAATG), and 408 to 428 (SSWVPTHSFAAISYLFIVGEI).

It belongs to the major facilitator superfamily. Phthalate permease family.

The protein resides in the cell inner membrane. The catalysed reaction is galactarate(in) + H(+)(in) = galactarate(out) + H(+)(out). It carries out the reaction D-glucarate(in) + H(+)(in) = D-glucarate(out) + H(+)(out). Its function is as follows. Probably involved in the uptake of galactarate and/or D-glucarate. The polypeptide is Probable galactarate/D-glucarate transporter GudP (gudP) (Pseudomonas putida (Arthrobacter siderocapsulatus)).